We begin with the raw amino-acid sequence, 508 residues long: Photosystem II CP47 reaction center protein (508 aa).

A run of 6 helical transmembrane segments spans residues S21–S36, I101–W115, G140–F156, I203–S218, V237–V252, and S457–R472.

This sequence belongs to the PsbB/PsbC family. PsbB subfamily. PSII is composed of 1 copy each of membrane proteins PsbA, PsbB, PsbC, PsbD, PsbE, PsbF, PsbH, PsbI, PsbJ, PsbK, PsbL, PsbM, PsbT, PsbX, PsbY, PsbZ, Psb30/Ycf12, at least 3 peripheral proteins of the oxygen-evolving complex and a large number of cofactors. It forms dimeric complexes. It depends on Binds multiple chlorophylls. PSII binds additional chlorophylls, carotenoids and specific lipids. as a cofactor.

It is found in the plastid. The protein localises to the chloroplast thylakoid membrane. Its function is as follows. One of the components of the core complex of photosystem II (PSII). It binds chlorophyll and helps catalyze the primary light-induced photochemical processes of PSII. PSII is a light-driven water:plastoquinone oxidoreductase, using light energy to abstract electrons from H(2)O, generating O(2) and a proton gradient subsequently used for ATP formation. In Aethionema cordifolium (Lebanon stonecress), this protein is Photosystem II CP47 reaction center protein.